Here is a 130-residue protein sequence, read N- to C-terminus: S-adenosylmethionine decarboxylase proenzyme (130 aa).

Ser-66 functions as the Schiff-base intermediate with substrate; via pyruvic acid in the catalytic mechanism. Pyruvic acid (Ser); by autocatalysis is present on Ser-66. His-71 serves as the catalytic Proton acceptor; for processing activity. Cys-86 acts as the Proton donor; for catalytic activity in catalysis.

Belongs to the prokaryotic AdoMetDC family. Type 1 subfamily. In terms of assembly, heterotetramer of two alpha and two beta chains arranged as a dimer of alpha/beta heterodimers. Requires pyruvate as cofactor. In terms of processing, is synthesized initially as an inactive proenzyme. Formation of the active enzyme involves a self-maturation process in which the active site pyruvoyl group is generated from an internal serine residue via an autocatalytic post-translational modification. Two non-identical subunits are generated from the proenzyme in this reaction, and the pyruvate is formed at the N-terminus of the alpha chain, which is derived from the carboxyl end of the proenzyme. The post-translation cleavage follows an unusual pathway, termed non-hydrolytic serinolysis, in which the side chain hydroxyl group of the serine supplies its oxygen atom to form the C-terminus of the beta chain, while the remainder of the serine residue undergoes an oxidative deamination to produce ammonia and the pyruvoyl group blocking the N-terminus of the alpha chain.

It carries out the reaction S-adenosyl-L-methionine + H(+) = S-adenosyl 3-(methylsulfanyl)propylamine + CO2. It functions in the pathway amine and polyamine biosynthesis; S-adenosylmethioninamine biosynthesis; S-adenosylmethioninamine from S-adenosyl-L-methionine: step 1/1. Catalyzes the decarboxylation of S-adenosylmethionine to S-adenosylmethioninamine (dcAdoMet), the propylamine donor required for the synthesis of the polyamines spermine and spermidine from the diamine putrescine. The protein is S-adenosylmethionine decarboxylase proenzyme of Bacillus cytotoxicus (strain DSM 22905 / CIP 110041 / 391-98 / NVH 391-98).